The chain runs to 276 residues: Hydroxyethylthiazole kinase (276 aa).

The ATP site is built by R126 and S172. Substrate is bound at residue G199.

This sequence belongs to the Thz kinase family. It depends on Mg(2+) as a cofactor.

It catalyses the reaction 5-(2-hydroxyethyl)-4-methylthiazole + ATP = 4-methyl-5-(2-phosphooxyethyl)-thiazole + ADP + H(+). It participates in cofactor biosynthesis; thiamine diphosphate biosynthesis; 4-methyl-5-(2-phosphoethyl)-thiazole from 5-(2-hydroxyethyl)-4-methylthiazole: step 1/1. Functionally, catalyzes the phosphorylation of the hydroxyl group of 4-methyl-5-beta-hydroxyethylthiazole (THZ). The protein is Hydroxyethylthiazole kinase of Burkholderia pseudomallei (strain 1106a).